The primary structure comprises 154 residues: Myoglobin (154 aa).

Residues 2–148 (GLSDGEWQIV…FRNDIAAKYK (147 aa)) enclose the Globin domain. At Ser-4 the chain carries Phosphoserine. His-65 lines the nitrite pocket. An O2-binding site is contributed by His-65. At Thr-68 the chain carries Phosphothreonine. His-94 contributes to the heme b binding site.

The protein belongs to the globin family. Monomeric.

Its subcellular location is the cytoplasm. The protein resides in the sarcoplasm. The catalysed reaction is Fe(III)-heme b-[protein] + nitric oxide + H2O = Fe(II)-heme b-[protein] + nitrite + 2 H(+). It catalyses the reaction H2O2 + AH2 = A + 2 H2O. In terms of biological role, monomeric heme protein which primary function is to store oxygen and facilitate its diffusion within muscle tissues. Reversibly binds oxygen through a pentacoordinated heme iron and enables its timely and efficient release as needed during periods of heightened demand. Depending on the oxidative conditions of tissues and cells, and in addition to its ability to bind oxygen, it also has a nitrite reductase activity whereby it regulates the production of bioactive nitric oxide. Under stress conditions, like hypoxia and anoxia, it also protects cells against reactive oxygen species thanks to its pseudoperoxidase activity. The protein is Myoglobin (MB) of Canis lupus familiaris (Dog).